Reading from the N-terminus, the 500-residue chain is Glucose-6-phosphate 1-dehydrogenase (500 aa).

NADP(+) contacts are provided by residues 18–25 (GASGDLSK), Arg52, and Lys155. Residues Lys155, 185–189 (HYLGK), Glu223, and Asp242 contribute to the D-glucose 6-phosphate site. His247 functions as the Proton acceptor in the catalytic mechanism. Position 338 (Lys338) interacts with NADP(+). Position 341 (Lys341) interacts with D-glucose 6-phosphate. NADP(+) contacts are provided by Lys347, Arg351, and Arg373. Gln375 serves as a coordination point for D-glucose 6-phosphate. Residues 381-383 (YFK), 401-403 (DLT), and Tyr483 contribute to the NADP(+) site.

The protein belongs to the glucose-6-phosphate dehydrogenase family.

Its subcellular location is the cytoplasm. The protein localises to the cytosol. The enzyme catalyses D-glucose 6-phosphate + NADP(+) = 6-phospho-D-glucono-1,5-lactone + NADPH + H(+). Its pathway is carbohydrate degradation; pentose phosphate pathway; D-ribulose 5-phosphate from D-glucose 6-phosphate (oxidative stage): step 1/3. In terms of biological role, catalyzes the rate-limiting step of the oxidative pentose-phosphate pathway, which represents a route for the dissimilation of carbohydrates besides glycolysis. The main function of this enzyme is to provide reducing power (NADPH) and pentose phosphates for fatty acid and nucleic acid synthesis. In Schizosaccharomyces pombe (strain 972 / ATCC 24843) (Fission yeast), this protein is Glucose-6-phosphate 1-dehydrogenase.